Reading from the N-terminus, the 361-residue chain is Peptide chain release factor 1 (361 aa).

Gln237 is modified (N5-methylglutamine). Basic and acidic residues predominate over residues 284–296 (EDEKRRSEEDSTR). Residues 284 to 305 (EDEKRRSEEDSTRRNLVSSGDR) are disordered.

The protein belongs to the prokaryotic/mitochondrial release factor family. Post-translationally, methylated by PrmC. Methylation increases the termination efficiency of RF1.

Its subcellular location is the cytoplasm. Peptide chain release factor 1 directs the termination of translation in response to the peptide chain termination codons UAG and UAA. The sequence is that of Peptide chain release factor 1 from Shewanella piezotolerans (strain WP3 / JCM 13877).